The following is a 298-amino-acid chain: KH domain-containing protein At1g09660/At1g09670 (298 aa).

Positions 152-219 constitute a KH domain; it reads DVPVDKYPSY…EHLCEPLHVL (68 aa). A disordered region spans residues 266 to 298; the sequence is NGTLREESPSPSLSPCLSPSMSPFNSKRAKTEI. Phosphoserine occurs at positions 273 and 287. The span at 274–288 shows a compositional bias: low complexity; that stretch reads PSPSLSPCLSPSMSP.

The protein resides in the nucleus. The protein is KH domain-containing protein At1g09660/At1g09670 of Arabidopsis thaliana (Mouse-ear cress).